The chain runs to 134 residues: Arginine decarboxylase proenzyme (134 aa).

Ser82 acts as the Schiff-base intermediate with substrate; via pyruvic acid in catalysis. The residue at position 82 (Ser82) is a Pyruvic acid (Ser); by autocatalysis. Residue His87 is the Proton acceptor; for processing activity of the active site. The active-site Proton donor; for catalytic activity is the Cys102.

It belongs to the prokaryotic AdoMetDC family. Type 1 subfamily. In terms of assembly, heterooctamer of four alpha and four beta chains arranged as a tetramer of alpha/beta heterodimers. It depends on pyruvate as a cofactor. In terms of processing, is synthesized initially as an inactive proenzyme. Formation of the active enzyme involves a self-maturation process in which the active site pyruvoyl group is generated from an internal serine residue via an autocatalytic post-translational modification. Two non-identical subunits are generated from the proenzyme in this reaction, and the pyruvate is formed at the N-terminus of the alpha chain, which is derived from the carboxyl end of the proenzyme. The post-translation cleavage follows an unusual pathway, termed non-hydrolytic serinolysis, in which the side chain hydroxyl group of the serine supplies its oxygen atom to form the C-terminus of the beta chain, while the remainder of the serine residue undergoes an oxidative deamination to produce ammonia and the pyruvoyl group blocking the N-terminus of the alpha chain.

It carries out the reaction L-arginine + H(+) = agmatine + CO2. The protein operates within amine and polyamine biosynthesis; agmatine biosynthesis; agmatine from L-arginine: step 1/1. Its activity is regulated as follows. Highly competitively inhibited by L-argininamide and L-arginine methyl ester. Also inhibited by alpha-difluoromethylarginine. Is not stimulated by potassium chloride as observed for other decarboxylases. Specifically catalyzes the decarboxylation of L-arginine to agmatine. Is also able to decarboxylate L-canavanine, although less efficiently. Has no S-adenosylmethionine decarboxylase (AdoMetDC) activity. The protein is Arginine decarboxylase proenzyme of Saccharolobus solfataricus (strain ATCC 35092 / DSM 1617 / JCM 11322 / P2) (Sulfolobus solfataricus).